Consider the following 22-residue polypeptide: thr operon leader peptide (22 aa).

Belongs to the thr operon leader peptide family.

In terms of biological role, this protein is involved in control of the biosynthesis of threonine. The polypeptide is thr operon leader peptide (Klebsiella pneumoniae (strain 342)).